Reading from the N-terminus, the 168-residue chain is Small ribosomal subunit protein uS5 (168 aa).

Residues 17-80 form the S5 DRBM domain; the sequence is IEDQLVAVNR…EDGKKKMINV (64 aa).

Belongs to the universal ribosomal protein uS5 family. Part of the 30S ribosomal subunit. Contacts proteins S4 and S8.

With S4 and S12 plays an important role in translational accuracy. Functionally, located at the back of the 30S subunit body where it stabilizes the conformation of the head with respect to the body. This chain is Small ribosomal subunit protein uS5, found in Lactobacillus helveticus (strain DPC 4571).